We begin with the raw amino-acid sequence, 127 residues long: Small ribosomal subunit protein uS11 (127 aa).

It belongs to the universal ribosomal protein uS11 family. As to quaternary structure, part of the 30S ribosomal subunit. Interacts with proteins S7 and S18. Binds to IF-3.

Its function is as follows. Located on the platform of the 30S subunit, it bridges several disparate RNA helices of the 16S rRNA. Forms part of the Shine-Dalgarno cleft in the 70S ribosome. This chain is Small ribosomal subunit protein uS11, found in Chlorobium luteolum (strain DSM 273 / BCRC 81028 / 2530) (Pelodictyon luteolum).